A 253-amino-acid polypeptide reads, in one-letter code: Uridylate kinase (253 aa).

Position 26–29 (Lys26–Gly29) interacts with ATP. Gly68 is a binding site for UMP. 2 residues coordinate ATP: Gly69 and Arg73. UMP contacts are provided by residues Asp88 and Thr149–Thr156. 3 residues coordinate ATP: Thr176, Tyr182, and Asp185.

Belongs to the UMP kinase family. Homohexamer.

Its subcellular location is the cytoplasm. It carries out the reaction UMP + ATP = UDP + ADP. The protein operates within pyrimidine metabolism; CTP biosynthesis via de novo pathway; UDP from UMP (UMPK route): step 1/1. Its activity is regulated as follows. Inhibited by UTP. In terms of biological role, catalyzes the reversible phosphorylation of UMP to UDP. The protein is Uridylate kinase of Chromohalobacter salexigens (strain ATCC BAA-138 / DSM 3043 / CIP 106854 / NCIMB 13768 / 1H11).